Consider the following 182-residue polypeptide: Epididymal-specific lipocalin-10 (182 aa).

Residues M1 to T19 form the signal peptide. N31 and N144 each carry an N-linked (GlcNAc...) asparagine glycan. A disulfide bridge connects residues C85 and C176. K165 bears the N6-acetyllysine mark.

It belongs to the calycin superfamily. Lipocalin family. Expressed in epididymis.

It localises to the secreted. Its function is as follows. May play a role in male fertility. May act as a retinoid carrier protein within the epididymis. The chain is Epididymal-specific lipocalin-10 (Lcn10) from Mus musculus (Mouse).